The sequence spans 124 residues: Fluoride-specific ion channel FluC 2 (124 aa).

Transmembrane regions (helical) follow at residues 1 to 21 (MSDI…RFQI), 34 to 54 (FLIL…LSLV), 66 to 86 (LILF…SFVY), and 103 to 123 (LFII…FLGT). Residues glycine 76 and serine 79 each coordinate Na(+).

Belongs to the fluoride channel Fluc/FEX (TC 1.A.43) family.

It is found in the cell inner membrane. The enzyme catalyses fluoride(in) = fluoride(out). Its activity is regulated as follows. Na(+) is not transported, but it plays an essential structural role and its presence is essential for fluoride channel function. In terms of biological role, fluoride-specific ion channel. Important for reducing fluoride concentration in the cell, thus reducing its toxicity. The polypeptide is Fluoride-specific ion channel FluC 2 (Prochlorococcus marinus (strain NATL2A)).